The sequence spans 247 residues: tRNA pseudouridine synthase A 1 (247 aa).

The active-site Nucleophile is D53. Y111 is a binding site for substrate.

Belongs to the tRNA pseudouridine synthase TruA family. As to quaternary structure, homodimer.

The enzyme catalyses uridine(38/39/40) in tRNA = pseudouridine(38/39/40) in tRNA. Formation of pseudouridine at positions 38, 39 and 40 in the anticodon stem and loop of transfer RNAs. In Bacillus cereus (strain ZK / E33L), this protein is tRNA pseudouridine synthase A 1.